Here is a 418-residue protein sequence, read N- to C-terminus: Gamma-glutamyl phosphate reductase (418 aa).

The protein belongs to the gamma-glutamyl phosphate reductase family.

It localises to the cytoplasm. It catalyses the reaction L-glutamate 5-semialdehyde + phosphate + NADP(+) = L-glutamyl 5-phosphate + NADPH + H(+). It functions in the pathway amino-acid biosynthesis; L-proline biosynthesis; L-glutamate 5-semialdehyde from L-glutamate: step 2/2. Functionally, catalyzes the NADPH-dependent reduction of L-glutamate 5-phosphate into L-glutamate 5-semialdehyde and phosphate. The product spontaneously undergoes cyclization to form 1-pyrroline-5-carboxylate. This is Gamma-glutamyl phosphate reductase from Geobacter sp. (strain M21).